The sequence spans 124 residues: Small ribosomal subunit protein uS12 (124 aa).

At Asp-89 the chain carries 3-methylthioaspartic acid.

It belongs to the universal ribosomal protein uS12 family. In terms of assembly, part of the 30S ribosomal subunit. Contacts proteins S8 and S17. May interact with IF1 in the 30S initiation complex.

In terms of biological role, with S4 and S5 plays an important role in translational accuracy. Functionally, interacts with and stabilizes bases of the 16S rRNA that are involved in tRNA selection in the A site and with the mRNA backbone. Located at the interface of the 30S and 50S subunits, it traverses the body of the 30S subunit contacting proteins on the other side and probably holding the rRNA structure together. The combined cluster of proteins S8, S12 and S17 appears to hold together the shoulder and platform of the 30S subunit. This chain is Small ribosomal subunit protein uS12, found in Klebsiella pneumoniae (strain 342).